We begin with the raw amino-acid sequence, 387 residues long: MPVPASWPHPPGPFLLLTLLLGLTEVAGEEELQMIQPEKLLLVTVGKTATLHCTVTSLLPVGPVLWFRGVGPGRELIYNQKEGHFPRVTTVSDLTKRNNMDFSIRISSITPADVGTYYCVKFRKGSPENVEFKSGPGTEMALGAKPSAPVVLGPAARTTPEHTVSFTCESHGFSPRDITLKWFKNGNELSDFQTNVDPTGQSVAYSIRSTARVVLDPWDVRSQVICEVAHVTLQGDPLRGTANLSEAIRVPPTLEVTQQPMRVGNQVNVTCQVRKFYPQSLQLTWSENGNVCQRETASTLTENKDGTYNWTSWFLVNISDQRDDVVLTCQVKHDGQLAVSKRLALEVTVHQKDQSSDATPGPASSLTALLLIAVLLGPIYVPWKQKT.

The N-terminal stretch at 1–28 (MPVPASWPHPPGPFLLLTLLLGLTEVAG) is a signal peptide. Positions 29 to 137 (EEELQMIQPE…ENVEFKSGPG (109 aa)) constitute an Ig-like V-type domain. The Extracellular portion of the chain corresponds to 29–360 (EEELQMIQPE…QKDQSSDATP (332 aa)). Intrachain disulfides connect cysteine 53-cysteine 119 and cysteine 168-cysteine 226. Ig-like C1-type domains lie at 146 to 245 (PSAP…ANLS) and 252 to 340 (PTLE…LAVS). N-linked (GlcNAc...) asparagine glycosylation is found at asparagine 243, asparagine 268, asparagine 309, and asparagine 317. An intrachain disulfide couples cysteine 271 to cysteine 329. A helical transmembrane segment spans residues 361–383 (GPASSLTALLLIAVLLGPIYVPW). Over 384 to 387 (KQKT) the chain is Cytoplasmic.

Interacts with CD47. Detected in liver, and at very low levels in brain, heart, lung, pancreas, kidney, placenta and skeletal muscle. Expressed on CD4+ T-cells, CD8+ T-cells, CD56-bright natural killer (NK) cells, CD20+ cells, and all activated NK cells. Mainly present in the paracortical T-cell area of lymph nodes, with only sparse positive cells in the mantle and in the germinal center of B-cell follicles. In the thymus, primarily expressed in the medulla on mature T-lymphocytes that have undergone thymic selection.

It is found in the membrane. In terms of biological role, probable immunoglobulin-like cell surface receptor. On binding with CD47, mediates cell-cell adhesion. Engagement on T-cells by CD47 on antigen-presenting cells results in enhanced antigen-specific T-cell proliferation and costimulates T-cell activation. The chain is Signal-regulatory protein gamma (SIRPG) from Homo sapiens (Human).